An 84-amino-acid polypeptide reads, in one-letter code: Kappa-conotoxin-like Im11.3 (84 aa).

The N-terminal stretch at 1 to 26 (MMFRLTSVSCFLLVIACLNLFQVVLT) is a signal peptide. 4 disulfides stabilise this stretch: Cys29–Cys43, Cys36–Cys48, Cys42–Cys51, and Cys47–Cys64. The propeptide occupies 71 to 84 (LRPSHPLFLLLPAR).

The protein belongs to the conotoxin I2 superfamily. In terms of tissue distribution, expressed by the venom duct.

It is found in the secreted. Its function is as follows. Inhibits the vertebrate voltage-gated potassium channels Kv1.1/KCNA1 and Kv1.3/KCNA3. In Conus imperialis (Imperial cone), this protein is Kappa-conotoxin-like Im11.3.